We begin with the raw amino-acid sequence, 139 residues long: Protein PsiE homolog (139 aa).

Helical transmembrane passes span 20 to 40, 60 to 80, 85 to 105, and 111 to 131; these read IVLC…LVKI, AEQA…VQYF, HFPL…LIIV, and VDTI…CLVL.

The protein belongs to the PsiE family.

It is found in the cell inner membrane. The protein is Protein PsiE homolog of Haemophilus influenzae (strain 86-028NP).